The chain runs to 490 residues: GTPase Der (490 aa).

EngA-type G domains lie at 3–166 and 203–376; these read PVVA…MEDL and IKLA…DSST. Residues 9–16, 56–60, 118–121, 209–216, 256–260, and 321–324 contribute to the GTP site; these read GRPNVGKS, DTGGI, NKTD, DTAGV, and NKWD. The KH-like domain maps to 377 to 461; it reads RRVGTSMLTR…PIRIQFKEGE (85 aa).

Belongs to the TRAFAC class TrmE-Era-EngA-EngB-Septin-like GTPase superfamily. EngA (Der) GTPase family. As to quaternary structure, associates with the 50S ribosomal subunit.

In terms of biological role, GTPase that plays an essential role in the late steps of ribosome biogenesis. The sequence is that of GTPase Der from Escherichia fergusonii (strain ATCC 35469 / DSM 13698 / CCUG 18766 / IAM 14443 / JCM 21226 / LMG 7866 / NBRC 102419 / NCTC 12128 / CDC 0568-73).